The chain runs to 271 residues: MGLAATRTKQRFGLDPRNTAWSNDTSRFGHQFLEKFGWKPGMGLGLSPMNSNTSHIKVSIKDDNVGLGAKLKRKDKKDEFDNGECAGLDVFQRILGRLNGKESKISEELDTQRKQKIIDGKWGIHFVKGEVLASTWDPKTHKLRNYSNAKKRKREGDDSEDEDDDDKEDKDSDKKKHKKHKKHKKDKKKDKKDKKEHKKHKKEEKRLKKEKRAEKTKETKKTSKLKSSESASNIPDAVNTRLSVRSKWIKQKRAALMDSKALNEIFMITND.

In terms of domain architecture, G-patch spans 25 to 72; that stretch reads TSRFGHQFLEKFGWKPGMGLGLSPMNSNTSHIKVSIKDDNVGLGAKLK. The disordered stretch occupies residues 147–239; it reads SNAKKRKREG…SASNIPDAVN (93 aa). The segment covering 157 to 168 has biased composition (acidic residues); that stretch reads DDSEDEDDDDKE. Over residues 175–203 the composition is skewed to basic residues; sequence KKHKKHKKHKKDKKKDKKDKKEHKKHKKE. A compositionally biased stretch (basic and acidic residues) spans 204–221; sequence EKRLKKEKRAEKTKETKK. Phosphoserine is present on Ser230.

This sequence belongs to the PINX1 family. In terms of assembly, interacts with EST2.

It localises to the nucleus. The protein localises to the nucleolus. Functionally, involved in rRNA-processing at A0, A1 and A2 sites through its action in U18 and U24 snoRNA 3'-end final trimming. Negative regulator of telomerase through competition for binding to EST2 with TLC1. This is Protein PXR1 (PXR1) from Saccharomyces cerevisiae (strain ATCC 204508 / S288c) (Baker's yeast).